Reading from the N-terminus, the 397-residue chain is Cytochrome b (397 aa).

The next 4 helical transmembrane spans lie at 38 to 58 (FGSLAGICLVIQIVTGVFLAM), 82 to 104 (WLLRYMHANGASMFFIVVYLHIF), 119 to 139 (VWCLGVVIFLLMIVTAFIGYV), and 185 to 205 (FFSLHYLLPFILVGASLLHLA). The heme b site is built by histidine 88 and histidine 102. Histidine 189 and histidine 203 together coordinate heme b. Histidine 208 provides a ligand contact to a ubiquinone. 4 consecutive transmembrane segments (helical) span residues 231–251 (FYVKDLVGWVAFAIFFSIWIF), 295–315 (AGGVAAIALVFISLLALPFFK), 327–347 (IYQGIFWLLLADCLLLGWIGC), and 354–373 (FVTIGQISSFFFFLFFAITP).

Belongs to the cytochrome b family. In terms of assembly, the main subunits of complex b-c1 are: cytochrome b, cytochrome c1 and the Rieske protein. Heme b serves as cofactor.

The protein resides in the mitochondrion inner membrane. Component of the ubiquinol-cytochrome c reductase complex (complex III or cytochrome b-c1 complex) that is part of the mitochondrial respiratory chain. The b-c1 complex mediates electron transfer from ubiquinol to cytochrome c. Contributes to the generation of a proton gradient across the mitochondrial membrane that is then used for ATP synthesis. This Oryza sativa subsp. indica (Rice) protein is Cytochrome b (MT-CYB).